Consider the following 333-residue polypeptide: Cytosolic Fe-S cluster assembly factor NBP35 (333 aa).

The [4Fe-4S] cluster site is built by Cys-32, Cys-46, Cys-49, and Cys-55. 85–92 (GKGGVGKS) is an ATP binding site. The [4Fe-4S] cluster site is built by Cys-258 and Cys-261.

It belongs to the Mrp/NBP35 ATP-binding proteins family. NUBP1/NBP35 subfamily. Heterotetramer of 2 NBP35 and 2 CFD1 chains. [4Fe-4S] cluster is required as a cofactor.

The protein resides in the cytoplasm. The protein localises to the nucleus. Functionally, component of the cytosolic iron-sulfur (Fe/S) protein assembly (CIA) machinery. Required for maturation of extramitochondrial Fe-S proteins. The NBP35-CFD1 heterotetramer forms a Fe-S scaffold complex, mediating the de novo assembly of an Fe-S cluster and its transfer to target apoproteins. Required for biogenesis and export of both ribosomal subunits, which may reflect a role in assembly of the Fe/S clusters in RLI1, a protein which performs rRNA processing and ribosome export. The polypeptide is Cytosolic Fe-S cluster assembly factor NBP35 (Eremothecium gossypii (strain ATCC 10895 / CBS 109.51 / FGSC 9923 / NRRL Y-1056) (Yeast)).